A 276-amino-acid chain; its full sequence is Putative pyridoxine kinase (276 aa).

Position 139 (Asn-139) interacts with ATP. Residue Glu-142 participates in Mg(2+) binding. Residues Lys-176–Ala-180, Asp-188, Gly-213, and Lys-238 contribute to the ATP site.

The protein belongs to the ThiD family.

The catalysed reaction is pyridoxal + ATP = pyridoxal 5'-phosphate + ADP + H(+). Functionally, phosphorylates B6 vitamers; functions in a salvage pathway. Uses pyridoxal, pyridoxine, and pyridoxamine as substrates. The chain is Putative pyridoxine kinase (pdxK) from Staphylococcus epidermidis (strain ATCC 35984 / DSM 28319 / BCRC 17069 / CCUG 31568 / BM 3577 / RP62A).